The following is a 300-amino-acid chain: Ferredoxin/F(420)H(2)-dependent CoB-CoM heterodisulfide reductase subunit B (300 aa).

Belongs to the HdrB family. As to quaternary structure, the ferredoxin/F(420)H(2)-dependent CoB-CoM heterodisulfide reductase is composed of three subunits; HdrA2, HdrB2 and HdrC2. The cofactor is [4Fe-4S] cluster.

It is found in the cytoplasm. The enzyme catalyses coenzyme B + coenzyme M + 2 oxidized [2Fe-2S]-[ferredoxin] = coenzyme M-coenzyme B heterodisulfide + 2 reduced [2Fe-2S]-[ferredoxin] + 2 H(+). It carries out the reaction coenzyme B + 2 oxidized coenzyme F420-(gamma-L-Glu)(n) + coenzyme M + 2 reduced [2Fe-2S]-[ferredoxin] + 4 H(+) = coenzyme M-coenzyme B heterodisulfide + 2 reduced coenzyme F420-(gamma-L-Glu)(n) + 2 oxidized [2Fe-2S]-[ferredoxin]. Its pathway is cofactor metabolism; coenzyme M-coenzyme B heterodisulfide reduction; coenzyme B and coenzyme M from coenzyme M-coenzyme B heterodisulfide: step 1/1. Its function is as follows. Part of a complex that catalyzes the reversible reduction of CoM-S-S-CoB to the thiol-coenzymes H-S-CoM (coenzyme M) and H-S-CoB (coenzyme B). Catalyzes the transfer of electrons from ferredoxin to CoM-S-S-CoB during methanogenesis from acetate. Electrons transfer from ferredoxin to CoM-S-S-CoB via HdrA2, HdrC2 and HdrB2. In addition, the complex can use electron bifurcation to direct electron pairs from reduced coenzyme F420 towards the reduction of both ferredoxin and CoB-CoM heterodisulfide. This activity may take place during Fe(III)-dependent anaerobic methane oxidation. In Methanosarcina acetivorans (strain ATCC 35395 / DSM 2834 / JCM 12185 / C2A), this protein is Ferredoxin/F(420)H(2)-dependent CoB-CoM heterodisulfide reductase subunit B.